A 284-amino-acid chain; its full sequence is Bifunctional protein FolD (284 aa).

Residues glycine 165 to serine 167, serine 190, and valine 231 each bind NADP(+).

It belongs to the tetrahydrofolate dehydrogenase/cyclohydrolase family. In terms of assembly, homodimer.

It catalyses the reaction (6R)-5,10-methylene-5,6,7,8-tetrahydrofolate + NADP(+) = (6R)-5,10-methenyltetrahydrofolate + NADPH. The enzyme catalyses (6R)-5,10-methenyltetrahydrofolate + H2O = (6R)-10-formyltetrahydrofolate + H(+). It functions in the pathway one-carbon metabolism; tetrahydrofolate interconversion. Functionally, catalyzes the oxidation of 5,10-methylenetetrahydrofolate to 5,10-methenyltetrahydrofolate and then the hydrolysis of 5,10-methenyltetrahydrofolate to 10-formyltetrahydrofolate. The polypeptide is Bifunctional protein FolD (Geobacillus kaustophilus (strain HTA426)).